A 400-amino-acid chain; its full sequence is Phosphoglycerate kinase (400 aa).

Substrate contacts are provided by residues 21 to 23, arginine 37, 60 to 63, arginine 121, and arginine 154; these read DFN and HLGR. Residues lysine 204, glutamate 326, and 355–358 each bind ATP; that span reads GGDS.

The protein belongs to the phosphoglycerate kinase family. Monomer.

It is found in the cytoplasm. The enzyme catalyses (2R)-3-phosphoglycerate + ATP = (2R)-3-phospho-glyceroyl phosphate + ADP. It participates in carbohydrate degradation; glycolysis; pyruvate from D-glyceraldehyde 3-phosphate: step 2/5. This Chloroflexus aggregans (strain MD-66 / DSM 9485) protein is Phosphoglycerate kinase.